Consider the following 1513-residue polypeptide: DNA-directed RNA polymerase subunit beta'' (1513 aa).

Residues C220, C296, C303, and C306 each coordinate Zn(2+). Residues 644–769 (RTREKDSENE…EYGNPEEDSV (126 aa)) are disordered. The segment covering 659-679 (NEYRTREEECKTLEDEYRTRE) has biased composition (basic and acidic residues). The segment covering 680 to 707 (EEYETLEDEYGIPENEYETLEDEYGILE) has biased composition (acidic residues). Basic and acidic residues predominate over residues 726–737 (NKYRPREDKYGT). Residues 738–767 (LEEDSEDEHGTLEEDSEEDSEDEYGNPEED) show a composition bias toward acidic residues.

This sequence belongs to the RNA polymerase beta' chain family. RpoC2 subfamily. In terms of assembly, in plastids the minimal PEP RNA polymerase catalytic core is composed of four subunits: alpha, beta, beta', and beta''. When a (nuclear-encoded) sigma factor is associated with the core the holoenzyme is formed, which can initiate transcription. The cofactor is Zn(2+).

It is found in the plastid. Its subcellular location is the chloroplast. It catalyses the reaction RNA(n) + a ribonucleoside 5'-triphosphate = RNA(n+1) + diphosphate. Its function is as follows. DNA-dependent RNA polymerase catalyzes the transcription of DNA into RNA using the four ribonucleoside triphosphates as substrates. The sequence is that of DNA-directed RNA polymerase subunit beta'' from Oryza nivara (Indian wild rice).